Consider the following 961-residue polypeptide: ATPase 7, plasma membrane-type (961 aa).

The Cytoplasmic segment spans residues 1 to 64; it reads MTDIEALKAI…EKKESKILKF (64 aa). A helical membrane pass occupies residues 65-84; it reads LGFMWNPLSWVMEAAALMAI. At 85-96 the chain is on the extracellular side; sequence GLAHGGGKPADY. The chain crosses the membrane as a helical span at residues 97–117; the sequence is HDFVGIVVLLLINSTISFVEE. Residues 118-246 are Cytoplasmic-facing; that stretch reads NNAGNAAAAL…GHFQKVLTAI (129 aa). A helical transmembrane segment spans residues 247-267; the sequence is GNFCICSIAVGMAIEIVVIYG. Residues 268-276 lie on the Extracellular side of the membrane; it reads LQKRGYRVG. The helical transmembrane segment at 277–294 threads the bilayer; sequence IDNLLVLLIGGIPIAMPT. The Cytoplasmic segment spans residues 295-643; sequence VLSVTMAIGA…TSRAIFQRMK (349 aa). Asp332 acts as the 4-aspartylphosphate intermediate in catalysis. Mg(2+) is bound by residues Asp588 and Asp592. The helical transmembrane segment at 644–665 threads the bilayer; it reads NYTIYAVSITIRIVMGFMLLCV. At 666 to 670 the chain is on the extracellular side; that stretch reads FWEFD. A helical transmembrane segment spans residues 671–693; it reads FPPFMVLVIAILNDGTIMTISKD. At 694 to 709 the chain is on the cytoplasmic side; that stretch reads RVKPSPTPDCWKLKEI. The helical transmembrane segment at 710–730 threads the bilayer; it reads FATGVVLGAYLAIMTVVFFWA. Over 731–764 the chain is Extracellular; the sequence is AYETNFFHNIFHVRNFNQHHFKMKDKKVAAHLNE. The helical transmembrane segment at 765-785 threads the bilayer; the sequence is QMASAVYLQVSTISQALIFVT. Topologically, residues 786–797 are cytoplasmic; the sequence is RSRSWSFVERPG. A helical membrane pass occupies residues 798–818; the sequence is FLLVIAFLIAQLVASVISAMA. At 819–826 the chain is on the extracellular side; the sequence is NWPFAGIR. The helical transmembrane segment at 827–847 threads the bilayer; that stretch reads SIGWGWTGVIWIFNIVTYMLL. The Cytoplasmic portion of the chain corresponds to 848–961; it reads DPIKFLVRYA…EDPNSNNYTI (114 aa). Thr894 bears the Phosphothreonine mark. Residues Ser910 and Ser942 each carry the phosphoserine modification. The segment at 959 to 961 is interaction with 14-3-3 proteins; sequence YTI. At Thr960 the chain carries Phosphothreonine.

Belongs to the cation transport ATPase (P-type) (TC 3.A.3) family. Type IIIA subfamily. In terms of assembly, binds to 14-3-3 proteins. The binding is induced by phosphorylation of Thr-960. Binding to 14-3-3 proteins activates the H(+)-ATPase. In terms of tissue distribution, expressed in guard cells, roots and leaves, and barely in mesophyll cells.

The protein localises to the membrane. The catalysed reaction is ATP + H2O + H(+)(in) = ADP + phosphate + 2 H(+)(out). The plasma membrane H(+) ATPase of plants and fungi generates a proton gradient that drives the active transport of nutrients by H(+)-symport. The resulting external acidification and/or internal alkinization may mediate growth responses. This chain is ATPase 7, plasma membrane-type (AHA7), found in Arabidopsis thaliana (Mouse-ear cress).